A 444-amino-acid polypeptide reads, in one-letter code: Type I restriction enzyme EcoDI specificity subunit (444 aa).

The protein belongs to the type-I restriction system S methylase family. As to quaternary structure, the type I restriction/modification system is composed of three polypeptides R, M and S; the restriction enzyme has stoichiometry R(2)M(2)S(1) while the methyltransferase is M(2)S(1).

Functionally, the specificity (S) subunit of a type I restriction enzyme; this subunit dictates DNA sequence specificity. The M and S subunits together form a methyltransferase (MTase) that methylates two adenine residues of the sequence 5'-TTAN(7)GTCY-3'. In the presence of the R subunit the complex can also act as an endonuclease, binding to the same target sequence but cutting the DNA some distance from this site. Whether the DNA is cut or modified depends on the methylation state of the target sequence. When the target site is unmodified, the DNA is cut. When the target site is hemimethylated, the complex acts as a maintenance MTase modifying the DNA so that both strands become methylated. After locating a non-methylated recognition site, the enzyme complex serves as a molecular motor that translocates DNA in an ATP-dependent manner until a collision occurs that triggers cleavage. This Escherichia coli protein is Type I restriction enzyme EcoDI specificity subunit.